Reading from the N-terminus, the 58-residue chain is Small ribosomal subunit protein bS21B (58 aa).

The protein belongs to the bacterial ribosomal protein bS21 family.

The chain is Small ribosomal subunit protein bS21B from Trichormus variabilis (strain ATCC 29413 / PCC 7937) (Anabaena variabilis).